Here is a 46-residue protein sequence, read N- to C-terminus: Lariatin (46 aa).

Positions 1–26 (MTSQPSKKTYNAPSLVQRGKFARTTA) are excised as a propeptide. Residues 27–34 (GSQLVYRE) constitute a cross-link (isoglutamyl glycine isopeptide (Gly-Glu)).

The linear precursor LarA is probably cleaved by the putative peptidase LarD, generating linear 18-residue Lariatin-A or 20-residue Lariatin-B. These linear peptides are probably cross-linked by LarB. Finally, lariatins A and B may be exported by ABC transporter LarE.

In terms of biological role, peptide antibiotic with selective activity against Mycobacterium species (M.smegmatis, MIC=3.13 ug/ml and M.tuberculosis, MIC=0.39 ug/ml). it is plausible that the target of lariatins lies within the cell wall in mycobacteria. Functionally, peptide antibiotic with selective activity against Mycobacterium species (M.smegmatis, MIC=6.25 ug/ml). The chain is Lariatin from Rhodococcus jostii.